Reading from the N-terminus, the 318-residue chain is NADH-ubiquinone oxidoreductase chain 1 (318 aa).

8 helical membrane-spanning segments follow: residues 3–23, 68–88, 102–122, 146–166, 171–191, 222–242, 253–273, and 294–314; these read FVNL…LTLL, LILF…MWIP, ILFM…SGWA, LAII…STLI, HIWL…STLA, LFFL…TILF, EMYT…FLWI, and LPLT…LASI.

The protein belongs to the complex I subunit 1 family.

The protein resides in the mitochondrion inner membrane. It carries out the reaction a ubiquinone + NADH + 5 H(+)(in) = a ubiquinol + NAD(+) + 4 H(+)(out). Its function is as follows. Core subunit of the mitochondrial membrane respiratory chain NADH dehydrogenase (Complex I) that is believed to belong to the minimal assembly required for catalysis. Complex I functions in the transfer of electrons from NADH to the respiratory chain. The immediate electron acceptor for the enzyme is believed to be ubiquinone. The protein is NADH-ubiquinone oxidoreductase chain 1 (MT-ND1) of Nyctalus plancyi velutinus (Fine-haired noctule).